A 539-amino-acid chain; its full sequence is Chaperonin GroEL (539 aa).

Residues 29–32, 86–90, Gly412, 475–477, and Asp491 contribute to the ATP site; these read TLGP, DGTTT, and NAA.

Belongs to the chaperonin (HSP60) family. Forms a cylinder of 14 subunits composed of two heptameric rings stacked back-to-back. Interacts with the co-chaperonin GroES.

Its subcellular location is the cytoplasm. The catalysed reaction is ATP + H2O + a folded polypeptide = ADP + phosphate + an unfolded polypeptide.. Together with its co-chaperonin GroES, plays an essential role in assisting protein folding. The GroEL-GroES system forms a nano-cage that allows encapsulation of the non-native substrate proteins and provides a physical environment optimized to promote and accelerate protein folding. The polypeptide is Chaperonin GroEL (Tsukamurella tyrosinosolvens).